The following is a 212-amino-acid chain: Glycerol-3-phosphate acyltransferase (212 aa).

5 consecutive transmembrane segments (helical) span residues 3 to 23, 69 to 89, 110 to 130, 143 to 163, and 165 to 185; these read LILL…LWIG, LLPM…FFAI, AGIL…IFFF, VIAA…HFLL, and DYDF…IIRH.

Belongs to the PlsY family. As to quaternary structure, probably interacts with PlsX.

The protein resides in the cell membrane. It catalyses the reaction an acyl phosphate + sn-glycerol 3-phosphate = a 1-acyl-sn-glycero-3-phosphate + phosphate. Its pathway is lipid metabolism; phospholipid metabolism. Catalyzes the transfer of an acyl group from acyl-phosphate (acyl-PO(4)) to glycerol-3-phosphate (G3P) to form lysophosphatidic acid (LPA). This enzyme utilizes acyl-phosphate as fatty acyl donor, but not acyl-CoA or acyl-ACP. The sequence is that of Glycerol-3-phosphate acyltransferase from Streptococcus mutans serotype c (strain ATCC 700610 / UA159).